The following is a 312-amino-acid chain: Olfactory receptor 6C70 (312 aa).

The Extracellular portion of the chain corresponds to 1–22; that stretch reads MKNHTRQIEFILLGLTDNSQLQ. A glycan (N-linked (GlcNAc...) asparagine) is linked at Asn-3. A helical membrane pass occupies residues 23-43; sequence IVIFLFLLLNCVLSMIGNFTI. Residues 44–63 lie on the Cytoplasmic side of the membrane; it reads IALILLDSQLKTPMYFFLRN. A helical transmembrane segment spans residues 64–84; the sequence is FSFLEISFTTACIPRFLITIV. The Extracellular segment spans residues 85-95; sequence TREKTISCNGC. Cys-95 and Cys-177 are joined by a disulfide. A helical transmembrane segment spans residues 96-116; it reads ISQLFFYIFLGVTEFFLLAAL. The Cytoplasmic portion of the chain corresponds to 117–141; sequence SYDRYVAICKPLRYMSIMSNKVCYQ. A helical membrane pass occupies residues 142–162; the sequence is LVFSSWVTGFLIIFTPLILGL. Topologically, residues 163–194 are extracellular; sequence NLDFCASNIIDHFICDISLILQLSCSDTHLLE. The helical transmembrane segment at 195–215 threads the bilayer; the sequence is LIAFLLAVMTLIVTLFLVILS. Over 216-237 the chain is Cytoplasmic; the sequence is YSYIIKTILKFPSAQQKKKAFS. A helical transmembrane segment spans residues 238 to 258; it reads TCSSHMIVVSITYGSCMFIYI. At 259–272 the chain is on the extracellular side; that stretch reads KPSANERVALSKGV. A helical transmembrane segment spans residues 273 to 290; that stretch reads TVLNTSVAPLLNPFIYTL. Residues 291–312 lie on the Cytoplasmic side of the membrane; the sequence is RNQQVKQAFKAVFRKIFSASDK.

The protein belongs to the G-protein coupled receptor 1 family.

The protein localises to the cell membrane. In terms of biological role, odorant receptor. This is Olfactory receptor 6C70 (OR6C70) from Homo sapiens (Human).